Here is a 155-residue protein sequence, read N- to C-terminus: Ribosome maturation factor RimP (155 aa).

The protein belongs to the RimP family.

It localises to the cytoplasm. Required for maturation of 30S ribosomal subunits. This Staphylococcus haemolyticus (strain JCSC1435) protein is Ribosome maturation factor RimP.